The following is a 31-amino-acid chain: VIGGQECARDSHPWQAAVYHFSDIECGGVLV.

One can recognise a Peptidase S1 domain in the interval 1 to 31 (VIGGQECARDSHPWQAAVYHFSDIECGGVLV).

Belongs to the peptidase S1 family. Kallikrein subfamily.

It carries out the reaction Preferential cleavage of Arg-|-Xaa bonds in small molecule substrates. Highly selective action to release kallidin (lysyl-bradykinin) from kininogen involves hydrolysis of Met-|-Xaa or Leu-|-Xaa.. Its function is as follows. Glandular kallikreins cleave Met-Lys and Arg-Ser bonds in kininogen to release Lys-bradykinin. In Cavia porcellus (Guinea pig), this protein is Kallikrein-1.